Consider the following 421-residue polypeptide: uncharacterized protein (421 aa).

It belongs to the glycosyltransferase 28 family.

This is an uncharacterized protein from Mycobacterium leprae (strain TN).